Here is a 1146-residue protein sequence, read N- to C-terminus: MNEKRLLFKDRHFTCSKIIGRRFACFAQRLSHRRKQSQCDLLNESTGQLPTTCSSAASNSINWNCRVKMTQQMQNLHLCQSKKHSAPSSPNAAKRLYRNLSEKLKGSHSSFDEAYFRTRTDRLSLRKTSVNFQGNEAMFEAVEQQDMDAVQILLYQYTPEELDLNTPNSEGLTPLDIAIMTNNVPIARILLRTGARESPHFVSLESRAMHLNTLVQEAQERVSELSAQVENEGFTLDNTEKEKQLKAWEWRYRLYRRMKTGFEHARAPEMPTNVCLMVTSSTSLTVSFQEPLSVNAAVVTRYKVEWSMSEDFSPLAGEIIMDNLQTLRCTITGLTMGQQYFVQVSAYNMKGWGPAQTTTPACASPSNWKDYDDREPRHKGQSEVLEGLLQQVRALHQHYSCRESTKLQTTGRKQSVSRSLKHLFHSSNKFVKTLKRGLYIAVIFYYKDNILVTNEDQVPIVEIDDSHTSSITQDFLWFTKLSCMWEDIRWLRQSIPISSSSSTVLQTRQKMLAATAQLQNLLGTHNLGRVYYEPIKDRHGNILIVTIREVEMLYSFFNGKWMQISKLQSQRKSLSTPEEPTALDILLITIQDILSYHKRSHQRLFPGLYLGYLKLCSSVDQIKVLVTQKLPNILCHVKIRENNNISREEWEWIQKLSGSESMESVDHTSDCPMQLFFYELQMAVKALLQQINIPLHQARNFRLYTQEVLEMGHNVSFLLLLPASDDVCTAPGQNNPYTPHSGFLNLPLQMFELVHFCSYREKFISLYCRLSAVVELDSLNTQQSLREAISDSEVAAAKQRHQQVLDFIQQIDEVWREMRWIMDALQYARYKQPVSGLPITKLIDPSDEQSLKKINSTSSSHIDCLPSPPPSPEMHRRKTVSDSQPCSDEEACSEVFLPTNSDYDSSDALSPRDLDLVYLSSHDIAQQTLSGLSGSAPDVLQVHDVKTPLGPGQDPQGEGPNPDHSCAEFLHSLTLTGFTPKNHAKTVSGGRPPLGFLGKRKPGKHPHYGGFSRHHRWLRIHSETQSLSLSEGIYTQHLSQACGLAQEPKEAKRAGPALDDPRGLTLAHAASLPEERNSSLQDARPSVRRLYVEPYAAAVVAQDEKPWASLSPPSGGRITLPSPTGPDVSQEGPTASPMSEILSSML.

ANK repeat units follow at residues 133–162 and 170–199; these read QGNE…PEEL and EGLT…RESP. The region spanning 270 to 366 is the Fibronectin type-III domain; sequence MPTNVCLMVT…TTTPACASPS (97 aa). Residues 607–614 form a highly conserved peptide sequence region; that stretch reads GLYLGYLK. Disordered stretches follow at residues 855–887, 945–964, and 1106–1146; these read NSTS…QPCS, VKTP…NPDH, and PWAS…SSML. Residues 1131–1146 show a composition bias toward polar residues; sequence EGPTASPMSEILSSML.

In terms of biological role, may play a role in neuronal function. In Homo sapiens (Human), this protein is Ankyrin repeat and fibronectin type-III domain-containing protein 1.